The chain runs to 382 residues: 3-isopropylmalate dehydrogenase (382 aa).

91 to 102 (GPKWGTGSVRPE) contributes to the NAD(+) binding site. Substrate contacts are provided by arginine 109, arginine 119, arginine 148, and aspartate 240. Mg(2+) is bound by residues aspartate 240, aspartate 265, and aspartate 269. 304-315 (GSAPDLTENKVN) contacts NAD(+).

This sequence belongs to the isocitrate and isopropylmalate dehydrogenases family. In terms of assembly, homodimer. It depends on Mg(2+) as a cofactor. Mn(2+) serves as cofactor.

It localises to the cytoplasm. The catalysed reaction is (2R,3S)-3-isopropylmalate + NAD(+) = 4-methyl-2-oxopentanoate + CO2 + NADH. Its pathway is amino-acid biosynthesis; L-leucine biosynthesis; L-leucine from 3-methyl-2-oxobutanoate: step 3/4. Functionally, catalyzes the oxidation of 3-carboxy-2-hydroxy-4-methylpentanoate (3-isopropylmalate) to 3-carboxy-4-methyl-2-oxopentanoate. The product decarboxylates to 4-methyl-2 oxopentanoate. The sequence is that of 3-isopropylmalate dehydrogenase (LEU2) from Debaryomyces hansenii (strain ATCC 36239 / CBS 767 / BCRC 21394 / JCM 1990 / NBRC 0083 / IGC 2968) (Yeast).